The primary structure comprises 351 residues: Phosphoribosylformylglycinamidine cyclo-ligase (351 aa).

It belongs to the AIR synthase family.

Its subcellular location is the cytoplasm. It carries out the reaction 2-formamido-N(1)-(5-O-phospho-beta-D-ribosyl)acetamidine + ATP = 5-amino-1-(5-phospho-beta-D-ribosyl)imidazole + ADP + phosphate + H(+). The protein operates within purine metabolism; IMP biosynthesis via de novo pathway; 5-amino-1-(5-phospho-D-ribosyl)imidazole from N(2)-formyl-N(1)-(5-phospho-D-ribosyl)glycinamide: step 2/2. In Azotobacter vinelandii (strain DJ / ATCC BAA-1303), this protein is Phosphoribosylformylglycinamidine cyclo-ligase.